The chain runs to 148 residues: Antigen GM6 (148 aa).

Positions 1–22 (KLKASDSRSFLDPMPEGVPLSE) are disordered. A run of 2 repeats spans residues 1–68 (KLKA…HELA) and 69–136 (KLKA…HELA). The stretch at 137 to 148 (KLKASDSRSFQS) is one 3; truncated repeat.

The protein localises to the cytoplasm. Its subcellular location is the cytoskeleton. In Trypanosoma brucei gambiense, this protein is Antigen GM6 (GM6).